Here is a 500-residue protein sequence, read N- to C-terminus: Sulfate adenylyltransferase (500 aa).

Residues 1-165 form an N-terminal region; that stretch reads MLSPHGGILQ…LEAIQLPAHY (165 aa). Positions 166–390 are catalytic; the sequence is DYLNLRKSPA…LRQYNPPRYR (225 aa). Residue Gln193 coordinates sulfate. ATP contacts are provided by residues 193–196 and 287–290; these read QTRN and GRDH. Residues Thr194, Arg195, and Asn196 contribute to the active site. Position 195 (Arg195) interacts with sulfate. Ala291 contacts sulfate. ATP is bound at residue Ile329. A required for oligomerization; adenylyl-sulfate kinase-like region spans residues 391–500; that stretch reads QGFVIVVNHE…FLEDNKFFQF (110 aa).

It belongs to the sulfate adenylyltransferase family. Homohexamer. Dimer of trimers.

It localises to the cytoplasm. The catalysed reaction is sulfate + ATP + H(+) = adenosine 5'-phosphosulfate + diphosphate. It functions in the pathway sulfur metabolism; hydrogen sulfide biosynthesis; sulfite from sulfate: step 1/3. Its function is as follows. Catalyzes the first intracellular reaction of sulfate assimilation, forming adenosine-5'-phosphosulfate (APS) from inorganic sulfate and ATP. Plays an important role in sulfate activation as a component of the biosynthesis pathway of sulfur-containing amino acids. In Eremothecium gossypii (strain ATCC 10895 / CBS 109.51 / FGSC 9923 / NRRL Y-1056) (Yeast), this protein is Sulfate adenylyltransferase.